We begin with the raw amino-acid sequence, 188 residues long: Threonylcarbamoyl-AMP synthase (188 aa).

A YrdC-like domain is found at 3–188 (QLSSTQVTPV…RSGLVLRNGQ (186 aa)).

The protein belongs to the SUA5 family. TsaC subfamily.

It localises to the cytoplasm. It catalyses the reaction L-threonine + hydrogencarbonate + ATP = L-threonylcarbamoyladenylate + diphosphate + H2O. Its function is as follows. Required for the formation of a threonylcarbamoyl group on adenosine at position 37 (t(6)A37) in tRNAs that read codons beginning with adenine. Catalyzes the conversion of L-threonine, HCO(3)(-)/CO(2) and ATP to give threonylcarbamoyl-AMP (TC-AMP) as the acyladenylate intermediate, with the release of diphosphate. This Shewanella denitrificans (strain OS217 / ATCC BAA-1090 / DSM 15013) protein is Threonylcarbamoyl-AMP synthase.